A 266-amino-acid chain; its full sequence is Apolipoprotein A-I (266 aa).

Positions Met-1–Ala-18 are cleaved as a signal peptide. 2 consecutive repeat copies span residues Leu-67–Gly-88 and Pro-89–Ser-110. Positions Leu-67–Gln-266 are 10 X approximate tandem repeats. Met-109 bears the Methionine sulfoxide mark. One copy of the 3; half-length repeat lies at Lys-111 to Gln-121. 5 consecutive repeat copies span residues Pro-122–Ala-143, Pro-144–Ser-165, Pro-166–Ala-187, Pro-188–Gly-209, and Ala-210–Lys-231. The 9; half-length repeat unit spans residues Pro-232 to Leu-242. The stretch at Pro-243 to Gln-266 is repeat 10.

This sequence belongs to the apolipoprotein A1/A4/E family. Homodimer. Interacts with APOA1BP and CLU. Component of a sperm activating protein complex (SPAP), consisting of APOA1, an immunoglobulin heavy chain, an immunoglobulin light chain and albumin. Interacts with NDRG1. Interacts with SCGB3A2. Interacts with NAXE and YJEFN3. Glycosylated. Post-translationally, palmitoylated. In terms of processing, phosphorylation sites are present in the extracellular medium.

It localises to the secreted. Its function is as follows. Participates in the reverse transport of cholesterol from tissues to the liver for excretion by promoting cholesterol efflux from tissues and by acting as a cofactor for the lecithin cholesterol acyltransferase (LCAT). As part of the SPAP complex, activates spermatozoa motility. This is Apolipoprotein A-I (APOA1) from Mirounga angustirostris (Northern elephant seal).